We begin with the raw amino-acid sequence, 308 residues long: MKITPIAFESLGVRSQATLIETKDLRVLVDPAISLAPRRYNLPPHQREVDRLTELAKVLVDVAKDVDVIIVSHYHYDHHDPGYVIPTDIYKNKLVFIKDPQNMINNSQKYRRAPRFLRSIKDKPSKIEIADGKTLELGHTTISFSPAVPHGADERLGYVIQVAISDKDSTVIFTSDIEGAPKDVHLKFTKEKMPKTIIIDGPLSYLLGRVLKEEELEKSIRNMEEIVKNGLETVIIDHHVLRDINYAEVLKPVYDIAKDLGVRVTTAAEYLNLEPLILEARRKELFKEDNRPARIPRGLANLLSAGEG.

This sequence belongs to the UPF0282 family.

This chain is UPF0282 protein YG5714_2245, found in Saccharolobus islandicus (strain Y.G.57.14 / Yellowstone #1) (Sulfolobus islandicus).